A 157-amino-acid chain; its full sequence is MIVLGIDPALGSLGWAVVAKESAKLKYLASGVIKTSSKDEIHHRLSYINSILEKVILEYKPNMATIEETFVNTNSVTSLKLGYARGAIMSLIGRYDLDMREFKPNTIKKTVTGYGHAEKDQILHMIKLLLPGTAAITNSDEADAVAIAYTCLVTKNY.

Active-site residues include D7, E67, and D140. 3 residues coordinate Mg(2+): D7, E67, and D140.

It belongs to the RuvC family. Homodimer which binds Holliday junction (HJ) DNA. The HJ becomes 2-fold symmetrical on binding to RuvC with unstacked arms; it has a different conformation from HJ DNA in complex with RuvA. In the full resolvosome a probable DNA-RuvA(4)-RuvB(12)-RuvC(2) complex forms which resolves the HJ. Mg(2+) is required as a cofactor.

It is found in the cytoplasm. The catalysed reaction is Endonucleolytic cleavage at a junction such as a reciprocal single-stranded crossover between two homologous DNA duplexes (Holliday junction).. Functionally, the RuvA-RuvB-RuvC complex processes Holliday junction (HJ) DNA during genetic recombination and DNA repair. Endonuclease that resolves HJ intermediates. Cleaves cruciform DNA by making single-stranded nicks across the HJ at symmetrical positions within the homologous arms, yielding a 5'-phosphate and a 3'-hydroxyl group; requires a central core of homology in the junction. The consensus cleavage sequence is 5'-(A/T)TT(C/G)-3'. Cleavage occurs on the 3'-side of the TT dinucleotide at the point of strand exchange. HJ branch migration catalyzed by RuvA-RuvB allows RuvC to scan DNA until it finds its consensus sequence, where it cleaves and resolves the cruciform DNA. The protein is Crossover junction endodeoxyribonuclease RuvC of Rickettsia bellii (strain OSU 85-389).